The primary structure comprises 267 residues: Phosphate import ATP-binding protein PstB (267 aa).

In terms of domain architecture, ABC transporter spans 21–262 (IAIRNLEFYY…PSKQQTEDYI (242 aa)). 53-60 (GPSGCGKS) provides a ligand contact to ATP.

Belongs to the ABC transporter superfamily. Phosphate importer (TC 3.A.1.7) family. The complex is composed of two ATP-binding proteins (PstB), two transmembrane proteins (PstC and PstA) and a solute-binding protein (PstS).

It is found in the cell inner membrane. It catalyses the reaction phosphate(out) + ATP + H2O = ADP + 2 phosphate(in) + H(+). Functionally, part of the ABC transporter complex PstSACB involved in phosphate import. Responsible for energy coupling to the transport system. This is Phosphate import ATP-binding protein PstB from Xylella fastidiosa (strain 9a5c).